Here is a 218-residue protein sequence, read N- to C-terminus: ATP phosphoribosyltransferase (218 aa).

The protein belongs to the ATP phosphoribosyltransferase family. Short subfamily. Heteromultimer composed of HisG and HisZ subunits.

The protein localises to the cytoplasm. It carries out the reaction 1-(5-phospho-beta-D-ribosyl)-ATP + diphosphate = 5-phospho-alpha-D-ribose 1-diphosphate + ATP. It functions in the pathway amino-acid biosynthesis; L-histidine biosynthesis; L-histidine from 5-phospho-alpha-D-ribose 1-diphosphate: step 1/9. Its function is as follows. Catalyzes the condensation of ATP and 5-phosphoribose 1-diphosphate to form N'-(5'-phosphoribosyl)-ATP (PR-ATP). Has a crucial role in the pathway because the rate of histidine biosynthesis seems to be controlled primarily by regulation of HisG enzymatic activity. The chain is ATP phosphoribosyltransferase from Synechococcus elongatus (strain ATCC 33912 / PCC 7942 / FACHB-805) (Anacystis nidulans R2).